A 132-amino-acid polypeptide reads, in one-letter code: Small ribosomal subunit protein uS8 (132 aa).

Belongs to the universal ribosomal protein uS8 family. In terms of assembly, part of the 30S ribosomal subunit. Contacts proteins S5 and S12.

One of the primary rRNA binding proteins, it binds directly to 16S rRNA central domain where it helps coordinate assembly of the platform of the 30S subunit. This is Small ribosomal subunit protein uS8 from Bifidobacterium adolescentis (strain ATCC 15703 / DSM 20083 / NCTC 11814 / E194a).